The sequence spans 337 residues: Large ribosomal subunit protein uL10 (337 aa).

The segment at 309 to 337 (EEVVEEQEEVKEEEEEESDMASGLGALFG) is disordered. Positions 310–327 (EVVEEQEEVKEEEEEESD) are enriched in acidic residues.

It belongs to the universal ribosomal protein uL10 family. As to quaternary structure, part of the 50S ribosomal subunit. Forms part of the ribosomal stalk which helps the ribosome interact with GTP-bound translation factors. Forms a heptameric L10(L12)2(L12)2(L12)2 complex, where L10 forms an elongated spine to which the L12 dimers bind in a sequential fashion.

Functionally, forms part of the ribosomal stalk, playing a central role in the interaction of the ribosome with GTP-bound translation factors. This chain is Large ribosomal subunit protein uL10, found in Methanococcoides burtonii (strain DSM 6242 / NBRC 107633 / OCM 468 / ACE-M).